The following is a 543-amino-acid chain: Probable protein kinase UbiB (543 aa).

Residues 123-501 (DFDSQALASA…QQRQGQSRYL (379 aa)) enclose the Protein kinase domain. Residues 129-137 (LASASIAQV) and Lys152 contribute to the ATP site. Asp287 acts as the Proton acceptor in catalysis. Residues 517 to 539 (LADATEVSTGFIVAGALAWFIGW) form a helical membrane-spanning segment.

This sequence belongs to the ABC1 family. UbiB subfamily.

Its subcellular location is the cell inner membrane. It functions in the pathway cofactor biosynthesis; ubiquinone biosynthesis [regulation]. Its function is as follows. Is probably a protein kinase regulator of UbiI activity which is involved in aerobic coenzyme Q (ubiquinone) biosynthesis. The polypeptide is Probable protein kinase UbiB (Yersinia pseudotuberculosis serotype O:1b (strain IP 31758)).